The sequence spans 322 residues: uncharacterized protein (322 aa).

Disordered stretches follow at residues Met-1 to Ala-51 and Gln-107 to Asp-130. The segment covering Leu-119–Asp-130 has biased composition (basic and acidic residues).

Expressed in skin and fetal lung.

This is an uncharacterized protein from Homo sapiens (Human).